A 206-amino-acid polypeptide reads, in one-letter code: Adenylyl-sulfate kinase (206 aa).

36–43 (GLSGSGKS) contacts ATP. Ser-110 acts as the Phosphoserine intermediate in catalysis.

The protein belongs to the APS kinase family.

It catalyses the reaction adenosine 5'-phosphosulfate + ATP = 3'-phosphoadenylyl sulfate + ADP + H(+). The protein operates within sulfur metabolism; hydrogen sulfide biosynthesis; sulfite from sulfate: step 2/3. In terms of biological role, catalyzes the synthesis of activated sulfate. This is Adenylyl-sulfate kinase (cysC) from Buchnera aphidicola subsp. Acyrthosiphon pisum (strain APS) (Acyrthosiphon pisum symbiotic bacterium).